The primary structure comprises 244 residues: NAD(P)H-quinone oxidoreductase subunit K (244 aa).

Cys60, Cys61, Cys125, and Cys156 together coordinate [4Fe-4S] cluster.

This sequence belongs to the complex I 20 kDa subunit family. NDH-1 can be composed of about 15 different subunits; different subcomplexes with different compositions have been identified which probably have different functions. The cofactor is [4Fe-4S] cluster.

The protein localises to the cellular thylakoid membrane. It catalyses the reaction a plastoquinone + NADH + (n+1) H(+)(in) = a plastoquinol + NAD(+) + n H(+)(out). The catalysed reaction is a plastoquinone + NADPH + (n+1) H(+)(in) = a plastoquinol + NADP(+) + n H(+)(out). In terms of biological role, NDH-1 shuttles electrons from an unknown electron donor, via FMN and iron-sulfur (Fe-S) centers, to quinones in the respiratory and/or the photosynthetic chain. The immediate electron acceptor for the enzyme in this species is believed to be plastoquinone. Couples the redox reaction to proton translocation, and thus conserves the redox energy in a proton gradient. Cyanobacterial NDH-1 also plays a role in inorganic carbon-concentration. This is NAD(P)H-quinone oxidoreductase subunit K from Prochlorococcus marinus (strain MIT 9515).